Reading from the N-terminus, the 393-residue chain is Probable acetyl-CoA acetyltransferase (393 aa).

Catalysis depends on C88, which acts as the Acyl-thioester intermediate. Active-site proton acceptor residues include H348 and C378.

The protein belongs to the thiolase-like superfamily. Thiolase family.

The protein localises to the cytoplasm. The catalysed reaction is 2 acetyl-CoA = acetoacetyl-CoA + CoA. This is Probable acetyl-CoA acetyltransferase (yqeF) from Escherichia coli (strain K12).